The following is a 57-amino-acid chain: Large ribosomal subunit protein bL32 (57 aa).

Positions 1–19 are enriched in basic residues; sequence MATPKRRMSRANTRSRRSQ. The tract at residues 1–20 is disordered; that stretch reads MATPKRRMSRANTRSRRSQW.

This sequence belongs to the bacterial ribosomal protein bL32 family.

This is Large ribosomal subunit protein bL32 from Mycobacterium marinum (strain ATCC BAA-535 / M).